A 668-amino-acid polypeptide reads, in one-letter code: SH2 domain-containing protein B (668 aa).

The segment at 373 to 411 (SVSGSEESYQQCNSHPQTSRQFENGNGMRLHEEDNSSID) is disordered. Residues 374-396 (VSGSEESYQQCNSHPQTSRQFEN) show a composition bias toward polar residues. An SH2 domain is found at 574-642 (WIEGFITKEE…DNICESSERY (69 aa)).

Phosphorylated on tyrosine residues. In terms of tissue distribution, expressed in roots, leaves, stems and flowers.

The protein is SH2 domain-containing protein B of Arabidopsis thaliana (Mouse-ear cress).